Reading from the N-terminus, the 271-residue chain is Type III pantothenate kinase (271 aa).

6–13 (DVRNTNIV) contacts ATP. 109-112 (GADR) provides a ligand contact to substrate. Residue Asp-111 is the Proton acceptor of the active site. Asp-131 is a K(+) binding site. Residue Thr-134 coordinates ATP. Thr-186 contacts substrate.

It belongs to the type III pantothenate kinase family. As to quaternary structure, homodimer. It depends on NH4(+) as a cofactor. K(+) serves as cofactor.

Its subcellular location is the cytoplasm. It carries out the reaction (R)-pantothenate + ATP = (R)-4'-phosphopantothenate + ADP + H(+). The protein operates within cofactor biosynthesis; coenzyme A biosynthesis; CoA from (R)-pantothenate: step 1/5. In terms of biological role, catalyzes the phosphorylation of pantothenate (Pan), the first step in CoA biosynthesis. The chain is Type III pantothenate kinase from Rhodococcus jostii (strain RHA1).